A 218-amino-acid chain; its full sequence is GILT-like protein ZK669.3 (218 aa).

An N-terminal signal peptide occupies residues 1-21 (MRRLNGVFICLILFITKISYA). N-linked (GlcNAc...) asparagine glycosylation is found at asparagine 129 and asparagine 185.

Belongs to the GILT family.

It is found in the secreted. This chain is GILT-like protein ZK669.3, found in Caenorhabditis elegans.